A 72-amino-acid polypeptide reads, in one-letter code: UPF0270 protein ESA_04379 (72 aa).

The protein belongs to the UPF0270 family.

The chain is UPF0270 protein ESA_04379 from Cronobacter sakazakii (strain ATCC BAA-894) (Enterobacter sakazakii).